A 701-amino-acid polypeptide reads, in one-letter code: UvrABC system protein B (701 aa).

The Helicase ATP-binding domain occupies 28–188 (RRIRAGERDV…VDVQYTRNDL (161 aa)). 41–48 (GATGTGKS) contacts ATP. A Beta-hairpin motif is present at residues 94–117 (YYDYYQPEAYIAQTDTYIEKDSSI). One can recognise a Helicase C-terminal domain in the interval 432-598 (QIDDLIGEIR…PLRKKIADIL (167 aa)). Residues 606–636 (DDTEAAESVPIGGSGRNSSRGRRAQGEPGRA) are disordered. The region spanning 656-691 (ADLIKDLTSQMMVAARDLQFELAARFRDEIADLKKE) is the UVR domain.

This sequence belongs to the UvrB family. As to quaternary structure, forms a heterotetramer with UvrA during the search for lesions. Interacts with UvrC in an incision complex.

It localises to the cytoplasm. Functionally, the UvrABC repair system catalyzes the recognition and processing of DNA lesions. A damage recognition complex composed of 2 UvrA and 2 UvrB subunits scans DNA for abnormalities. Upon binding of the UvrA(2)B(2) complex to a putative damaged site, the DNA wraps around one UvrB monomer. DNA wrap is dependent on ATP binding by UvrB and probably causes local melting of the DNA helix, facilitating insertion of UvrB beta-hairpin between the DNA strands. Then UvrB probes one DNA strand for the presence of a lesion. If a lesion is found the UvrA subunits dissociate and the UvrB-DNA preincision complex is formed. This complex is subsequently bound by UvrC and the second UvrB is released. If no lesion is found, the DNA wraps around the other UvrB subunit that will check the other stand for damage. The chain is UvrABC system protein B from Mycobacterium ulcerans (strain Agy99).